The primary structure comprises 348 residues: MRVLTIFLLFMTSIFAVQIKDVANTVGVRDNQLIGYGLVVGLNGSGDGTSSKFTLQSISNLLQGMNIKVDPNDIKSKNTAAVMVTAKLPAFAKSGDKLDITVSSMGDAKSLQGGTLLLTALRGIDGEIYAIAQGSISTGGLTPRPGGAGSHSTAATVMGGANVEREIPQNFSQNSDLTLSLKVADFKTANDIERVLNTVFGEEVAKAIDSRTVKLKKPEDLSNVDFMARVLEQDIAYKPQSKVIIDERTGTVIAGVDVEVEPVLITHKDITIKIDPNNNAVANQNEIDMKDGGFVDPSSNTLRINNAKSTVANIARMLNKLGATPNDIIAIMENLKRAGAINADLEII.

An N-terminal signal peptide occupies residues 1–16; sequence MRVLTIFLLFMTSIFA.

The protein belongs to the FlgI family. The basal body constitutes a major portion of the flagellar organelle and consists of four rings (L,P,S, and M) mounted on a central rod.

The protein localises to the periplasm. Its subcellular location is the bacterial flagellum basal body. Assembles around the rod to form the L-ring and probably protects the motor/basal body from shearing forces during rotation. The chain is Flagellar P-ring protein from Campylobacter jejuni subsp. jejuni serotype O:23/36 (strain 81-176).